The chain runs to 550 residues: CTP synthase (550 aa).

The amidoligase domain stretch occupies residues 1–277 (MNGSADAGPR…GRAVERALGL (277 aa)). CTP is bound at residue Ser23. Residue Ser23 participates in UTP binding. An ATP-binding site is contributed by 24-29 (SLGKGI). Tyr64 is a binding site for L-glutamine. Asp81 contacts ATP. 2 residues coordinate Mg(2+): Asp81 and Glu151. CTP is bound by residues 158–160 (DIE), 198–203 (KTKPTQ), and Lys234. UTP is bound by residues 198-203 (KTKPTQ) and Lys234. The Glutamine amidotransferase type-1 domain maps to 302–549 (KIAIAGKYVK…VEAALAYQER (248 aa)). Gly364 lines the L-glutamine pocket. The active-site Nucleophile; for glutamine hydrolysis is Cys391. Residues 392–395 (LGLQ), Glu415, and Arg472 contribute to the L-glutamine site. Catalysis depends on residues His522 and Glu524.

The protein belongs to the CTP synthase family. As to quaternary structure, homotetramer.

The catalysed reaction is UTP + L-glutamine + ATP + H2O = CTP + L-glutamate + ADP + phosphate + 2 H(+). The enzyme catalyses L-glutamine + H2O = L-glutamate + NH4(+). It carries out the reaction UTP + NH4(+) + ATP = CTP + ADP + phosphate + 2 H(+). The protein operates within pyrimidine metabolism; CTP biosynthesis via de novo pathway; CTP from UDP: step 2/2. With respect to regulation, allosterically activated by GTP, when glutamine is the substrate; GTP has no effect on the reaction when ammonia is the substrate. The allosteric effector GTP functions by stabilizing the protein conformation that binds the tetrahedral intermediate(s) formed during glutamine hydrolysis. Inhibited by the product CTP, via allosteric rather than competitive inhibition. Functionally, catalyzes the ATP-dependent amination of UTP to CTP with either L-glutamine or ammonia as the source of nitrogen. Regulates intracellular CTP levels through interactions with the four ribonucleotide triphosphates. The chain is CTP synthase from Thermus thermophilus (strain ATCC BAA-163 / DSM 7039 / HB27).